The chain runs to 424 residues: Mitogen-activated protein kinase 9 (424 aa).

The region spanning 26-321 is the Protein kinase domain; it reads YQQLKPIGSG…VDEALRHPYI (296 aa). Residues 32 to 40 and Lys55 each bind ATP; that span reads IGSGAQGIV. Asp151 serves as the catalytic Proton acceptor. Thr183 is modified (phosphothreonine; by MAP2K7). The TXY signature appears at 183 to 185; that stretch reads TPY. A Phosphotyrosine; by MAP2K4 modification is found at Tyr185. Residues 368-424 are disordered; it reads KNGVVKDQPSDAAVSSNATPSQSSSINDISSMSTEQTLASDTDSSLDASTGPLEGCR. Residues 388 to 417 are compositionally biased toward low complexity; it reads SQSSSINDISSMSTEQTLASDTDSSLDAST.

This sequence belongs to the protein kinase superfamily. CMGC Ser/Thr protein kinase family. MAP kinase subfamily. In terms of assembly, interacts with MECOM. Interacts with DCLK2. Binds to at least four scaffolding proteins, MAPK8IP1/JIP-1, MAPK8IP2/JIP-2, MAPK8IP3/JIP-3/JSAP1 and SPAG9/MAPK8IP4/JIP-4. These proteins also bind other components of the JNK signaling pathway. Interacts with NFATC4. Interacts with ATF7; the interaction does not phosphorylate ATF7 but acts as a docking site for ATF7-associated partners such as JUN. Interacts with BCL10. Interacts with CTNNB1 and GSK3B. Interacts with MAPKBP1. Interacts with POU5F1; phosphorylates POU5F1 at 'Ser-355'. Found in a complex with SH3RF1, RAC2, MAP3K7/TAK1, MAP2K7/MKK7, MAPK8IP1/JIP1 and MAPK8/JNK1. The cofactor is Mg(2+). Post-translationally, dually phosphorylated on Thr-183 and Tyr-185 by MAP2K7 and MAP2K4, which activates the enzyme. Autophosphorylated in vitro.

Its subcellular location is the cytoplasm. The protein localises to the nucleus. The enzyme catalyses L-seryl-[protein] + ATP = O-phospho-L-seryl-[protein] + ADP + H(+). It catalyses the reaction L-threonyl-[protein] + ATP = O-phospho-L-threonyl-[protein] + ADP + H(+). With respect to regulation, activated by threonine and tyrosine phosphorylation by either of two dual specificity kinases, MAP2K4 and MAP2K7. MAP2K4 shows a strong preference for Tyr-185 while MAP2K7 phosphorylates Tyr-183 preferentially. Inhibited by dual specificity phosphatases, such as DUSP1. Its function is as follows. Serine/threonine-protein kinase involved in various processes such as cell proliferation, differentiation, migration, transformation and programmed cell death. Extracellular stimuli such as pro-inflammatory cytokines or physical stress stimulate the stress-activated protein kinase/c-Jun N-terminal kinase (SAP/JNK) signaling pathway. In this cascade, two dual specificity kinases MAP2K4/MKK4 and MAP2K7/MKK7 phosphorylate and activate MAPK9/JNK2. In turn, MAPK9/JNK2 phosphorylates a number of transcription factors, primarily components of AP-1 such as JUN and ATF2 and thus regulates AP-1 transcriptional activity. In response to oxidative or ribotoxic stresses, inhibits rRNA synthesis by phosphorylating and inactivating the RNA polymerase 1-specific transcription initiation factor RRN3. Promotes stressed cell apoptosis by phosphorylating key regulatory factors including TP53 and YAP1. In T-cells, MAPK8 and MAPK9 are required for polarized differentiation of T-helper cells into Th1 cells. Upon T-cell receptor (TCR) stimulation, is activated by CARMA1, BCL10, MAP2K7 and MAP3K7/TAK1 to regulate JUN protein levels. Plays an important role in the osmotic stress-induced epithelial tight-junctions disruption. When activated, promotes beta-catenin/CTNNB1 degradation and inhibits the canonical Wnt signaling pathway. Also participates in neurite growth in spiral ganglion neurons. Phosphorylates the CLOCK-BMAL1 heterodimer and plays a role in the regulation of the circadian clock. Phosphorylates POU5F1, which results in the inhibition of POU5F1's transcriptional activity and enhances its proteasomal degradation. Phosphorylates ALKBH5 in response to reactive oxygen species (ROS), promoting ALKBH5 sumoylation and inactivation. In terms of biological role, MAPK9 isoforms display different binding patterns: alpha-1 and alpha-2 preferentially bind to JUN, whereas beta-1 and beta-2 bind to ATF2. However, there is no correlation between binding and phosphorylation, which is achieved at about the same efficiency by all isoforms. JUNB is not a substrate for JNK2 alpha-2, and JUND binds only weakly to it. In Homo sapiens (Human), this protein is Mitogen-activated protein kinase 9 (MAPK9).